Reading from the N-terminus, the 479-residue chain is Cardiolipin synthase (479 aa).

Transmembrane regions (helical) follow at residues 5–25 (SLLL…IIFL) and 34–54 (WAWV…YLIF). 2 PLD phosphodiesterase domains span residues 216-243 (INYR…GDEY) and 392-419 (QNGF…DVRS). Active-site residues include H221, K223, D228, H397, K399, and D404.

Belongs to the phospholipase D family. Cardiolipin synthase subfamily.

It is found in the cell membrane. The enzyme catalyses 2 a 1,2-diacyl-sn-glycero-3-phospho-(1'-sn-glycerol) = a cardiolipin + glycerol. In terms of biological role, catalyzes the reversible phosphatidyl group transfer from one phosphatidylglycerol molecule to another to form cardiolipin (CL) (diphosphatidylglycerol) and glycerol. This chain is Cardiolipin synthase (cls), found in Oceanobacillus iheyensis (strain DSM 14371 / CIP 107618 / JCM 11309 / KCTC 3954 / HTE831).